A 510-amino-acid polypeptide reads, in one-letter code: Lysine--tRNA ligase (510 aa).

The Mg(2+) site is built by E420 and E427.

This sequence belongs to the class-II aminoacyl-tRNA synthetase family. In terms of assembly, homodimer. It depends on Mg(2+) as a cofactor.

It is found in the cytoplasm. The catalysed reaction is tRNA(Lys) + L-lysine + ATP = L-lysyl-tRNA(Lys) + AMP + diphosphate. This Psychrobacter sp. (strain PRwf-1) protein is Lysine--tRNA ligase.